The following is a 312-amino-acid chain: Olfactory receptor 5p57 (312 aa).

Residues 1-25 (MEPGNYTVVTEFILLGLTDDITVSV) are Extracellular-facing. N5 carries an N-linked (GlcNAc...) asparagine glycan. Residues 26 to 46 (ILFVMFLIVYSVTLMGNLNII) form a helical membrane-spanning segment. The Cytoplasmic portion of the chain corresponds to 47-54 (VLIRTSPQ). A helical transmembrane segment spans residues 55–75 (LHTPMYLFLSHLAFLDIGYSS). Residues 76–99 (SVTPIMLRGFLRKGTFIPVAGCVA) lie on the Extracellular side of the membrane. A disulfide bridge links C97 with C189. Residues 100-120 (QLCIVVAFGTSESFLLASMAY) form a helical membrane-spanning segment. Topologically, residues 121–133 (DRYVAICSPLLYS) are cytoplasmic. The helical transmembrane segment at 134–154 (TQMSSTVCILLVGTSYLGGWV) threads the bilayer. Residues 155-196 (NAWIFTGCSLNLSFCGPNKINHFFCDYSPLLKLSCSHDFSFE) lie on the Extracellular side of the membrane. N165 carries an N-linked (GlcNAc...) asparagine glycan. A helical transmembrane segment spans residues 197–217 (VIPAISSGSIIVVTVFIIALS). Over 218–237 (YVYILVSILKMRSTEGRQKA) the chain is Cytoplasmic. Residues 238–258 (FSTCTSHLTAVTLFFGTITFI) traverse the membrane as a helical segment. Over 259-271 (YVMPQSSYSTDQN) the chain is Extracellular. Residues 272–292 (KVVSVFYTVVIPMLNPLIYSF) traverse the membrane as a helical segment. The Cytoplasmic segment spans residues 293 to 312 (RNKEVKEAMKKLIAKTHWWS).

Belongs to the G-protein coupled receptor 1 family.

Its subcellular location is the cell membrane. Probable odorant receptor, which recognizes only aliphatic alcohols, suggesting that it may convey a 'woody' or 'sweet' sour. In Mus musculus (Mouse), this protein is Olfactory receptor 5p57.